The chain runs to 622 residues: Low affinity potassium transport system protein Kup (622 aa).

Transmembrane regions (helical) follow at residues 9 to 29 (LPAV…TSPL), 49 to 69 (VFGF…LKYL), 101 to 121 (VLVI…VITP), 137 to 157 (PSMD…LFII), 165 to 185 (VGKL…VLGA), 212 to 232 (AVSF…EALY), 247 to 267 (WFTV…ALLL), 279 to 299 (LLAP…ATII), 337 to 357 (IYIP…IVSF), 363 to 383 (LAAA…ILFC), 397 to 417 (AWVL…ANVV), and 419 to 439 (ILSG…IMTT).

This sequence belongs to the HAK/KUP transporter (TC 2.A.72) family.

It localises to the cell inner membrane. The enzyme catalyses K(+)(in) + H(+)(in) = K(+)(out) + H(+)(out). Functionally, responsible for the low-affinity transport of potassium into the cell. Likely operates as a K(+):H(+) symporter. The sequence is that of Low affinity potassium transport system protein Kup from Pectobacterium carotovorum subsp. carotovorum (strain PC1).